The chain runs to 359 residues: Protein PAM71-homolog, chloroplastic (359 aa).

The N-terminal 66 residues, 1–66, are a transit peptide targeting the chloroplast; the sequence is MKLTSLSKNA…DLLWGKFRVR (66 aa). Residues 71 to 102 form a disordered region; that stretch reads GVGSGSYSGGEEDGSQSSSLDQSPATSSESLK. Residues 85 to 98 show a composition bias toward low complexity; the sequence is SQSSSLDQSPATSS. 7 helical membrane-spanning segments follow: residues 110–130, 149–169, 177–197, 207–227, 269–289, 311–331, and 339–359; these read SLSI…ITFV, AFSL…AALL, LVLL…VVIG, FQTT…FFGL, LTNP…AEWG, GAIA…AFLA, and VGYV…FGVF.

The protein belongs to the GDT1 family.

Its subcellular location is the plastid. It is found in the chloroplast membrane. Functionally, probable chloroplast-localized Mn(2+)/H(+) and/or Ca(2+)/H(+) antiporter regulating Ca(2+), Mn(2+) and pH homeostasis. The sequence is that of Protein PAM71-homolog, chloroplastic from Arabidopsis thaliana (Mouse-ear cress).